The primary structure comprises 5207 residues: E3 ubiquitin-protein ligase RNF213 (5207 aa).

Disordered stretches follow at residues 1-20 and 27-365; these read MECP…FCSQ and PAAP…EADV. Over residues 34–43 the composition is skewed to polar residues; sequence SENNNSTMAS. A compositionally biased stretch (basic residues) spans 89–100; the sequence is KKKKRKKKKKGN. Composition is skewed to low complexity over residues 101–117 and 136–157; these read KSAS…PASP and SQAQ…ATTP. A compositionally biased stretch (polar residues) spans 188–197; that stretch reads SEAQSSPQFQ. 2 positions are modified to phosphoserine: S208 and S217. Residues 248–266 are compositionally biased toward polar residues; that stretch reads GGSSEPGTELQTTEQQAGA. 3 stretches are compositionally biased toward basic and acidic residues: residues 285–294, 309–346, and 353–362; these read AGKEMKEKTQ, HCQE…EGKN, and KNEKEQKNQE. A coiled-coil region spans residues 343–374; the sequence is EGKNRSAAAVKNEKEQKNQEADVQEVKASTLS. K1151 participates in a covalent cross-link: Glycyl lysine isopeptide (Lys-Gly) (interchain with G-Cter in SUMO2). A Phosphoserine modification is found at S1258. ATP-binding positions include 1995–2000, E2098, D2155, and R2216; that span reads GVGKSL. Position 2273 is a phosphoserine (S2273). The ATP site is built by K2499 and S2574. C3997, C4000, C4012, H4014, C4017, C4020, C4032, C4035, C4505, and H4509 together coordinate Zn(2+). An RING-type zinc finger spans residues 3997 to 4036; the sequence is CSICLGDAKDPVCLPCDHVHCLRCLRAWFASEQMICPYCL. Residues 4483 to 4555 form an RZ-type zinc finger; it reads MPEDLLAQAR…VKDKADRTQT (73 aa). Catalysis depends on C4516, which acts as the Nucleophile; for E3 ubiquitin-lipopolysaccharide ligase activity. Positions 4525 and 4528 each coordinate Zn(2+).

Belongs to the AAA ATPase family. As to quaternary structure, monomer. Interacts with UBE2L3/UBCH7; UBE2L3/UBCH7 is the most efficient ubiquitin-conjugating enzyme E2 for the ubiquitin ligase activity. Interacts with UBE2N/UBC13; promoting 'Lys-63'-linked ubiquitination of target proteins. (Microbial infection) Interacts with M.tuberculosis protein Rv3655c, which impairs caspase-8 activation and suppresses macrophage apoptosis by blocking the extrinsic pathway. Post-translationally, autoubiquitinated. Widely expressed (at protein level). As to expression, major isoform detected in all tissues examined. In terms of tissue distribution, minor isoform with restricted expression.

The protein resides in the cytoplasm. Its subcellular location is the cytosol. It is found in the lipid droplet. The catalysed reaction is S-ubiquitinyl-[E2 ubiquitin-conjugating enzyme]-L-cysteine + [acceptor protein]-L-lysine = [E2 ubiquitin-conjugating enzyme]-L-cysteine + N(6)-ubiquitinyl-[acceptor protein]-L-lysine.. It carries out the reaction ATP + H2O = ADP + phosphate + H(+). It functions in the pathway protein modification; protein ubiquitination. Atypical E3 ubiquitin ligase that can catalyze ubiquitination of both proteins and lipids, and which is involved in various processes, such as lipid metabolism, angiogenesis and cell-autonomous immunity. Acts as a key immune sensor by catalyzing ubiquitination of the lipid A moiety of bacterial lipopolysaccharide (LPS) via its RZ-type zinc-finger: restricts the proliferation of cytosolic bacteria, such as Salmonella, by generating the bacterial ubiquitin coat through the ubiquitination of LPS. Also acts indirectly by mediating the recruitment of the LUBAC complex, which conjugates linear polyubiquitin chains. Ubiquitination of LPS triggers cell-autonomous immunity, such as antibacterial autophagy, leading to degradation of the microbial invader. Involved in lipid metabolism by regulating fat storage and lipid droplet formation; act by inhibiting the lipolytic process. Also regulates lipotoxicity by inhibiting desaturation of fatty acids. Also acts as an E3 ubiquitin-protein ligase via its RING-type zinc finger: mediates 'Lys-63'-linked ubiquitination of target proteins. Involved in the non-canonical Wnt signaling pathway in vascular development: acts by mediating ubiquitination and degradation of FLNA and NFATC2 downstream of RSPO3, leading to inhibit the non-canonical Wnt signaling pathway and promoting vessel regression. Also has ATPase activity; ATPase activity is required for ubiquitination of LPS. The sequence is that of E3 ubiquitin-protein ligase RNF213 from Homo sapiens (Human).